The sequence spans 202 residues: Histone chaperone ASF1B (202 aa).

Residues 1–155 (MAKVSVLNVA…VTRFHINWDN (155 aa)) are interaction with CHAF1B. The segment at 1–156 (MAKVSVLNVA…TRFHINWDNN (156 aa)) is interaction with histone H3. Residue S198 is modified to Phosphoserine; by TLK2.

It belongs to the ASF1 family. In terms of assembly, interacts with histone H3 (via C-terminus), including histone H3.1, H3.2 and H3.3, and histone H4; the interaction with H3 is direct. Interacts with the CHAF1A, CHAF1B and RBBP4 subunits of the CAF-1 complex. Interacts with HAT1, NASP and TAF1. Found in a soluble complex with NASP and histones H3 and H4; the interaction with NASP is probably indirect and mediated by H3-H4. Interacts with CDAN1. Found in a cytosolic complex with IPO4 and histones H3 and H4. Interacts with CREBBP. In terms of processing, phosphorylated by TLK1 and TLK2. Highly expressed in testis and at lower levels in colon, small intestine and thymus.

It is found in the nucleus. The protein resides in the cytoplasm. Its subcellular location is the cytosol. Functionally, histone chaperone that facilitates histone deposition and histone exchange and removal during nucleosome assembly and disassembly. Cooperates with chromatin assembly factor 1 (CAF-1) to promote replication-dependent chromatin assembly. Also involved in the nuclear import of the histone H3-H4 dimer together with importin-4 (IPO4): specifically recognizes and binds newly synthesized histones with the monomethylation of H3 'Lys-9' (H3K9me1) and diacetylation at 'Lys-5' and 'Lys-12' of H4 (H4K5K12ac) marks in the cytosol. Does not participate in replication-independent nucleosome deposition which is mediated by ASF1A and HIRA. Required for gonad development. In Homo sapiens (Human), this protein is Histone chaperone ASF1B.